Reading from the N-terminus, the 122-residue chain is Large ribosomal subunit protein uL14 (122 aa).

This sequence belongs to the universal ribosomal protein uL14 family. Part of the 50S ribosomal subunit. Forms a cluster with proteins L3 and L19. In the 70S ribosome, L14 and L19 interact and together make contacts with the 16S rRNA in bridges B5 and B8.

Functionally, binds to 23S rRNA. Forms part of two intersubunit bridges in the 70S ribosome. The sequence is that of Large ribosomal subunit protein uL14 from Borrelia hermsii (strain HS1 / DAH).